Consider the following 120-residue polypeptide: Large ribosomal subunit protein uL22 (120 aa).

Belongs to the universal ribosomal protein uL22 family. In terms of assembly, part of the 50S ribosomal subunit.

In terms of biological role, this protein binds specifically to 23S rRNA; its binding is stimulated by other ribosomal proteins, e.g. L4, L17, and L20. It is important during the early stages of 50S assembly. It makes multiple contacts with different domains of the 23S rRNA in the assembled 50S subunit and ribosome. The globular domain of the protein is located near the polypeptide exit tunnel on the outside of the subunit, while an extended beta-hairpin is found that lines the wall of the exit tunnel in the center of the 70S ribosome. This is Large ribosomal subunit protein uL22 from Corynebacterium diphtheriae (strain ATCC 700971 / NCTC 13129 / Biotype gravis).